We begin with the raw amino-acid sequence, 522 residues long: Light-independent protochlorophyllide reductase subunit B (522 aa).

[4Fe-4S] cluster is bound at residue D36. The active-site Proton donor is D290. 425–426 (GL) is a substrate binding site.

It belongs to the ChlB/BchB/BchZ family. Protochlorophyllide reductase is composed of three subunits; ChlL, ChlN and ChlB. Forms a heterotetramer of two ChlB and two ChlN subunits. [4Fe-4S] cluster serves as cofactor.

It catalyses the reaction chlorophyllide a + oxidized 2[4Fe-4S]-[ferredoxin] + 2 ADP + 2 phosphate = protochlorophyllide a + reduced 2[4Fe-4S]-[ferredoxin] + 2 ATP + 2 H2O. It functions in the pathway porphyrin-containing compound metabolism; chlorophyll biosynthesis (light-independent). Functionally, component of the dark-operative protochlorophyllide reductase (DPOR) that uses Mg-ATP and reduced ferredoxin to reduce ring D of protochlorophyllide (Pchlide) to form chlorophyllide a (Chlide). This reaction is light-independent. The NB-protein (ChlN-ChlB) is the catalytic component of the complex. In Synechococcus sp. (strain CC9311), this protein is Light-independent protochlorophyllide reductase subunit B.